A 242-amino-acid chain; its full sequence is MLCCMRRTKQVEKNDEDQKIEQDGIKPEDKAHKAATKIQASFRGHITRKKLKGEKKGDAPAAEAEANEKDEAAVAEGTEKKEGEGSTPAEAAPGAGPKPEEKTGKAGETPSEEKKGEGAPDAATEQAAPQAPAPSEEKAGSAETESATKASTDNSPSSKAEDAPAKEEPKQADVPAAVTAAAATAPAAEDAAAMATAQPPTETAESSQAEEKIEAVDETKPKDSARQDEGKGEEREADQEHA.

The tract at residues 1 to 242 is disordered; sequence MLCCMRRTKQ…EEREADQEHA (242 aa). S-palmitoyl cysteine attachment occurs at residues Cys3 and Cys4. Positions 9-32 are enriched in basic and acidic residues; the sequence is KQVEKNDEDQKIEQDGIKPEDKAH. The region spanning 31-60 is the IQ domain; the sequence is AHKAATKIQASFRGHITRKKLKGEKKGDAP. Phosphoserine; by PHK and PKC is present on Ser41. Over residues 66 to 84 the composition is skewed to basic and acidic residues; the sequence is ANEKDEAAVAEGTEKKEGE. The segment covering 85–97 has biased composition (low complexity); it reads GSTPAEAAPGAGP. Ser86 bears the Phosphoserine mark. Over residues 98–118 the composition is skewed to basic and acidic residues; the sequence is KPEEKTGKAGETPSEEKKGEG. Residues 119 to 134 are compositionally biased toward low complexity; the sequence is APDAATEQAAPQAPAP. The segment covering 143–158 has biased composition (polar residues); sequence ETESATKASTDNSPSS. Phosphoserine is present on residues Ser155, Ser157, and Ser158. A compositionally biased stretch (basic and acidic residues) spans 159 to 171; the sequence is KAEDAPAKEEPKQ. The segment covering 172–204 has biased composition (low complexity); sequence ADVPAAVTAAAATAPAAEDAAAMATAQPPTETA. Phosphoserine; by CK2 occurs at positions 206 and 207. The segment covering 209 to 242 has biased composition (basic and acidic residues); the sequence is AEEKIEAVDETKPKDSARQDEGKGEEREADQEHA.

This sequence belongs to the neuromodulin family. As to quaternary structure, identified in a complex containing FGFR4, NCAM1, CDH2, PLCG1, FRS2, SRC, SHC1, GAP43 and CTTN. Interacts (via IQ domain) with calmodulin. Binds calmodulin with a greater affinity in the absence of Ca(2+) than in its presence. In terms of processing, phosphorylated. Phosphorylation of this protein by a protein kinase C is specifically correlated with certain forms of synaptic plasticity. Post-translationally, palmitoylated by ZDHHC3. Palmitoylation is regulated by ARF6 and is essential for plasma membrane association and axonal and dendritic filopodia induction. Deacylated by LYPLA2.

Its subcellular location is the cell membrane. The protein resides in the cell projection. The protein localises to the growth cone membrane. It localises to the synapse. It is found in the filopodium membrane. Its subcellular location is the perikaryon. The protein resides in the dendrite. The protein localises to the axon. It localises to the cytoplasm. In terms of biological role, this protein is associated with nerve growth. It is a major component of the motile 'growth cones' that form the tips of elongating axons. Plays a role in axonal and dendritic filopodia induction. The sequence is that of Neuromodulin (GAP43) from Bos taurus (Bovine).